Reading from the N-terminus, the 389-residue chain is Arrestin-C (389 aa).

The segment at 369-389 is disordered; it reads AQQEPSGESQEALAAEGNEGS.

Belongs to the arrestin family. As to quaternary structure, homodimer; disulfide-linked in response to retinal illumination. Interacts with CXCR4; the interaction is dependent on the C-terminal phosphorylation of CXCR4 and modulates the calcium ion mobilization activity of CXCR4. Interacts with GPR84. Expressed in cone photoreceptors in the retina (at protein level).

The protein resides in the photoreceptor inner segment. It localises to the cell projection. The protein localises to the cilium. Its subcellular location is the photoreceptor outer segment. May play a role in an as yet undefined retina-specific signal transduction. Could bind to photoactivated-phosphorylated red/green opsins. This Bos taurus (Bovine) protein is Arrestin-C (ARR3).